The sequence spans 287 residues: Eukaryotic translation initiation factor 3 subunit G (287 aa).

Disordered stretches follow at residues 1–34 (MSKL…KDGT) and 159–184 (TAGG…YVPP). Positions 207–285 (ATLRVTNVSE…LILRVEFAKR (79 aa)) constitute an RRM domain.

Belongs to the eIF-3 subunit G family. In terms of assembly, component of the eukaryotic translation initiation factor 3 (eIF-3) complex.

Its subcellular location is the cytoplasm. Functionally, RNA-binding component of the eukaryotic translation initiation factor 3 (eIF-3) complex, which is involved in protein synthesis of a specialized repertoire of mRNAs and, together with other initiation factors, stimulates binding of mRNA and methionyl-tRNAi to the 40S ribosome. The eIF-3 complex specifically targets and initiates translation of a subset of mRNAs involved in cell proliferation. This subunit can bind 18S rRNA. The polypeptide is Eukaryotic translation initiation factor 3 subunit G (tif35) (Aspergillus oryzae (strain ATCC 42149 / RIB 40) (Yellow koji mold)).